The chain runs to 367 residues: Innexin inx2 (367 aa).

Residues 1–22 (MFDVFGSVKGLLKIDQVCIDNN) lie on the Cytoplasmic side of the membrane. The chain crosses the membrane as a helical span at residues 23 to 43 (VFRMHYKATVIILIAFSLLVT). Residues 44-109 (SRQYIGDPID…EDEVKYHKYY (66 aa)) are Extracellular-facing. Residues 110 to 130 (QWVCFVLFFQAILFYVPRYLW) traverse the membrane as a helical segment. Residues 130-179 (WKSWEGGRLKMLVMDLNSPIVNDECKNDRKKILVDYFIGNLNRHNFYAFR) are interaction with shg. Over 131–179 (KSWEGGRLKMLVMDLNSPIVNDECKNDRKKILVDYFIGNLNRHNFYAFR) the chain is Cytoplasmic. A helical membrane pass occupies residues 180–200 (FFVCEALNFVNVIGQIYFVDF). Topologically, residues 201–266 (FLDGEFSTYG…VLPLNIVNEK (66 aa)) are extracellular. Residues 267–287 (IYVFLWFWFIILSIMSGISLI) traverse the membrane as a helical segment. The Cytoplasmic segment spans residues 288-367 (YRIAVVAGPK…HSAHKRPFDA (80 aa)).

The protein belongs to the pannexin family. In terms of assembly, monomer and heterooligomer with ogre or Inx3 (via cytoplasmic C-terminal region). Interacts (via cytoplasmic loop) with shg (via cytoplasmic region). Interacts with arm. In ovary, expressed in inner germarial sheath cells, prefollicular cells, follicle cells, nurse cells and oocytes. Expressed in embryonic epithelial cells. Expressed in foregut and hindgut from stage 11-17, segmentally repeated tracheal placodes at stage 14, salivary gland at stage 16 and proventriculus at stage 16-17 (at protein level). During germband extension stage (stage 7), expressed in epidermal epithelial cells. Expressed in cephalic furrow. Repeating epidermal pattern emerges at stage 11, refines to one or two cells at each side of the segment borders by stage 13. Expressed in the imaginal wing disk. In pupae, expressed in the CNS and in primary, secondary and tertiary pigment cells of the retina. Expressed in optic lamina of the adult CNS.

Its subcellular location is the cell membrane. It is found in the cell junction. It localises to the gap junction. The protein localises to the cytoplasm. The protein resides in the apical cell membrane. Its subcellular location is the apicolateral cell membrane. It is found in the basolateral cell membrane. It localises to the lateral cell membrane. Structural components of the gap junctions. Involved in gap junctional communication between germline and somatic cells which is essential for normal oogenesis. In embryonic epidermis, required for epithelial morphogenesis. Required for keyhole formation during early stages of proventriculus development in response to wg signaling. In follicle cells, promotes the formation of egg chambers in part through regulation of shg and baz at the boundary between germ cells and follicle cells. In inner germarial sheath cells, required for survival of early germ cells and for cyst formation. This chain is Innexin inx2 (Inx2), found in Drosophila melanogaster (Fruit fly).